A 149-amino-acid polypeptide reads, in one-letter code: Nucleoside diphosphate kinase (149 aa).

ATP contacts are provided by lysine 9, phenylalanine 57, arginine 85, threonine 91, arginine 102, and asparagine 112. Histidine 115 functions as the Pros-phosphohistidine intermediate in the catalytic mechanism.

It belongs to the NDK family. It depends on Mg(2+) as a cofactor.

The protein localises to the cytoplasm. The enzyme catalyses a 2'-deoxyribonucleoside 5'-diphosphate + ATP = a 2'-deoxyribonucleoside 5'-triphosphate + ADP. It catalyses the reaction a ribonucleoside 5'-diphosphate + ATP = a ribonucleoside 5'-triphosphate + ADP. In terms of biological role, major role in the synthesis of nucleoside triphosphates other than ATP. The ATP gamma phosphate is transferred to the NDP beta phosphate via a ping-pong mechanism, using a phosphorylated active-site intermediate. The sequence is that of Nucleoside diphosphate kinase from Methanosarcina mazei (strain ATCC BAA-159 / DSM 3647 / Goe1 / Go1 / JCM 11833 / OCM 88) (Methanosarcina frisia).